Consider the following 27-residue polypeptide: Superoxide dismutase [Mn] (27 aa).

This sequence belongs to the iron/manganese superoxide dismutase family. Homodimer. Requires Mn(2+) as cofactor.

It catalyses the reaction 2 superoxide + 2 H(+) = H2O2 + O2. In terms of biological role, destroys superoxide anion radicals which are normally produced within the cells and which are toxic to biological systems. The sequence is that of Superoxide dismutase [Mn] (sodA) from Desulfovibrio desulfuricans.